A 131-amino-acid polypeptide reads, in one-letter code: Small ribosomal subunit protein bS6 (131 aa).

The interval E98 to E131 is disordered. Basic and acidic residues predominate over residues K104 to F116. Residues T120–E131 show a composition bias toward acidic residues.

Belongs to the bacterial ribosomal protein bS6 family.

Functionally, binds together with bS18 to 16S ribosomal RNA. This Edwardsiella ictaluri (strain 93-146) protein is Small ribosomal subunit protein bS6.